The sequence spans 400 residues: Acetate kinase (400 aa).

N10 is a binding site for Mg(2+). K17 serves as a coordination point for ATP. R91 lines the substrate pocket. D148 functions as the Proton donor/acceptor in the catalytic mechanism. Residues H208–G212, D283–R285, and G331–N335 contribute to the ATP site. E385 serves as a coordination point for Mg(2+).

The protein belongs to the acetokinase family. As to quaternary structure, homodimer. Mg(2+) serves as cofactor. The cofactor is Mn(2+).

The protein localises to the cytoplasm. It carries out the reaction acetate + ATP = acetyl phosphate + ADP. The protein operates within metabolic intermediate biosynthesis; acetyl-CoA biosynthesis; acetyl-CoA from acetate: step 1/2. Its function is as follows. Catalyzes the formation of acetyl phosphate from acetate and ATP. Can also catalyze the reverse reaction. The protein is Acetate kinase of Shewanella putrefaciens (strain CN-32 / ATCC BAA-453).